The chain runs to 97 residues: Large ribosomal subunit protein uL23 (97 aa).

The protein belongs to the universal ribosomal protein uL23 family. In terms of assembly, part of the 50S ribosomal subunit. Contacts protein L29, and trigger factor when it is bound to the ribosome.

One of the early assembly proteins it binds 23S rRNA. One of the proteins that surrounds the polypeptide exit tunnel on the outside of the ribosome. Forms the main docking site for trigger factor binding to the ribosome. The sequence is that of Large ribosomal subunit protein uL23 from Myxococcus xanthus (strain DK1622).